A 305-amino-acid chain; its full sequence is tRNA pseudouridine synthase B (305 aa).

Asp-39 serves as the catalytic Nucleophile.

The protein belongs to the pseudouridine synthase TruB family. Type 1 subfamily.

It carries out the reaction uridine(55) in tRNA = pseudouridine(55) in tRNA. Functionally, responsible for synthesis of pseudouridine from uracil-55 in the psi GC loop of transfer RNAs. This is tRNA pseudouridine synthase B from Staphylococcus aureus (strain MRSA252).